The sequence spans 113 residues: T cell receptor alpha variable 5 (113 aa).

Positions 1-22 are cleaved as a signal peptide; the sequence is MKTFAGFSFLFLWLQLDCMSRG. Residues 23 to 113 enclose the Ig-like domain; sequence EDVEQSLFLS…DSAIYFCAES (91 aa). The N-linked (GlcNAc...) asparagine glycan is linked to N42. C43 and C110 are disulfide-bonded.

Alpha-beta TR is a heterodimer composed of an alpha and beta chain; disulfide-linked. The alpha-beta TR is associated with the transmembrane signaling CD3 coreceptor proteins to form the TR-CD3 (TcR or TCR). The assembly of alpha-beta TR heterodimers with CD3 occurs in the endoplasmic reticulum where a single alpha-beta TR heterodimer associates with one CD3D-CD3E heterodimer, one CD3G-CD3E heterodimer and one CD247 homodimer forming a stable octameric structure. CD3D-CD3E and CD3G-CD3E heterodimers preferentially associate with TR alpha and TR beta chains, respectively. The association of the CD247 homodimer is the last step of TcR assembly in the endoplasmic reticulum and is required for transport to the cell surface.

Its subcellular location is the cell membrane. Its function is as follows. V region of the variable domain of T cell receptor (TR) alpha chain that participates in the antigen recognition. Alpha-beta T cell receptors are antigen specific receptors which are essential to the immune response and are present on the cell surface of T lymphocytes. Recognize peptide-major histocompatibility (MH) (pMH) complexes that are displayed by antigen presenting cells (APC), a prerequisite for efficient T cell adaptive immunity against pathogens. Binding of alpha-beta TR to pMH complex initiates TR-CD3 clustering on the cell surface and intracellular activation of LCK that phosphorylates the ITAM motifs of CD3G, CD3D, CD3E and CD247 enabling the recruitment of ZAP70. In turn ZAP70 phosphorylates LAT, which recruits numerous signaling molecules to form the LAT signalosome. The LAT signalosome propagates signal branching to three major signaling pathways, the calcium, the mitogen-activated protein kinase (MAPK) kinase and the nuclear factor NF-kappa-B (NF-kB) pathways, leading to the mobilization of transcription factors that are critical for gene expression and essential for T cell growth and differentiation. The T cell repertoire is generated in the thymus, by V-(D)-J rearrangement. This repertoire is then shaped by intrathymic selection events to generate a peripheral T cell pool of self-MH restricted, non-autoaggressive T cells. Post-thymic interaction of alpha-beta TR with the pMH complexes shapes TR structural and functional avidity. This is T cell receptor alpha variable 5 from Homo sapiens (Human).